The following is a 67-amino-acid chain: Photosystem II reaction center protein H (67 aa).

The chain crosses the membrane as a helical span at residues 27-47 (GAVPVMAFVGVLLLVFLVILL).

Belongs to the PsbH family. PSII is composed of 1 copy each of membrane proteins PsbA, PsbB, PsbC, PsbD, PsbE, PsbF, PsbH, PsbI, PsbJ, PsbK, PsbL, PsbM, PsbT, PsbX, PsbY, Psb30/Ycf12, peripheral proteins PsbO, CyanoQ (PsbQ), PsbU, PsbV and a large number of cofactors. It forms dimeric complexes.

The protein localises to the cellular thylakoid membrane. Functionally, one of the components of the core complex of photosystem II (PSII), required for its stability and/or assembly. PSII is a light-driven water:plastoquinone oxidoreductase that uses light energy to abstract electrons from H(2)O, generating O(2) and a proton gradient subsequently used for ATP formation. It consists of a core antenna complex that captures photons, and an electron transfer chain that converts photonic excitation into a charge separation. This is Photosystem II reaction center protein H from Prochlorococcus marinus (strain SARG / CCMP1375 / SS120).